A 272-amino-acid chain; its full sequence is Acyl-[acyl-carrier-protein]--UDP-N-acetylglucosamine O-acyltransferase (272 aa).

This sequence belongs to the transferase hexapeptide repeat family. LpxA subfamily. In terms of assembly, homotrimer.

It is found in the cytoplasm. The catalysed reaction is a (3R)-hydroxyacyl-[ACP] + UDP-N-acetyl-alpha-D-glucosamine = a UDP-3-O-[(3R)-3-hydroxyacyl]-N-acetyl-alpha-D-glucosamine + holo-[ACP]. It functions in the pathway glycolipid biosynthesis; lipid IV(A) biosynthesis; lipid IV(A) from (3R)-3-hydroxytetradecanoyl-[acyl-carrier-protein] and UDP-N-acetyl-alpha-D-glucosamine: step 1/6. Involved in the biosynthesis of lipid A, a phosphorylated glycolipid that anchors the lipopolysaccharide to the outer membrane of the cell. This Rhizobium leguminosarum bv. trifolii (strain WSM2304) protein is Acyl-[acyl-carrier-protein]--UDP-N-acetylglucosamine O-acyltransferase.